The primary structure comprises 443 residues: Probable glycine dehydrogenase (decarboxylating) subunit 1 (443 aa).

This sequence belongs to the GcvP family. N-terminal subunit subfamily. In terms of assembly, the glycine cleavage system is composed of four proteins: P, T, L and H. In this organism, the P 'protein' is a heterodimer of two subunits.

It catalyses the reaction N(6)-[(R)-lipoyl]-L-lysyl-[glycine-cleavage complex H protein] + glycine + H(+) = N(6)-[(R)-S(8)-aminomethyldihydrolipoyl]-L-lysyl-[glycine-cleavage complex H protein] + CO2. In terms of biological role, the glycine cleavage system catalyzes the degradation of glycine. The P protein binds the alpha-amino group of glycine through its pyridoxal phosphate cofactor; CO(2) is released and the remaining methylamine moiety is then transferred to the lipoamide cofactor of the H protein. This chain is Probable glycine dehydrogenase (decarboxylating) subunit 1, found in Nitratidesulfovibrio vulgaris (strain ATCC 29579 / DSM 644 / CCUG 34227 / NCIMB 8303 / VKM B-1760 / Hildenborough) (Desulfovibrio vulgaris).